A 144-amino-acid polypeptide reads, in one-letter code: Large ribosomal subunit protein uL13 (144 aa).

Belongs to the universal ribosomal protein uL13 family. In terms of assembly, part of the 50S ribosomal subunit.

Functionally, this protein is one of the early assembly proteins of the 50S ribosomal subunit, although it is not seen to bind rRNA by itself. It is important during the early stages of 50S assembly. This chain is Large ribosomal subunit protein uL13, found in Magnetococcus marinus (strain ATCC BAA-1437 / JCM 17883 / MC-1).